Reading from the N-terminus, the 215-residue chain is Adenylate kinase (215 aa).

10–15 (GAGKGT) is a binding site for ATP. Residues 30-59 (STGDMFRAAMKNETEMGKLAKSFIDKGELV) form an NMP region. Residues Thr-31, Arg-36, 57 to 59 (ELV), 86 to 89 (GYPR), and Gln-93 contribute to the AMP site. Positions 127 to 165 (GRYICRNCGATYHKIFNPTKVEGTCDVCGSHDLYQRADD) are LID. Arg-128 is an ATP binding site. Cys-131 and Cys-134 together coordinate Zn(2+). 137-138 (TY) contributes to the ATP binding site. Residues Cys-151 and Cys-154 each contribute to the Zn(2+) site. The AMP site is built by Arg-162 and Arg-173. Gln-201 contributes to the ATP binding site.

It belongs to the adenylate kinase family. Monomer.

The protein resides in the cytoplasm. The catalysed reaction is AMP + ATP = 2 ADP. It functions in the pathway purine metabolism; AMP biosynthesis via salvage pathway; AMP from ADP: step 1/1. Functionally, catalyzes the reversible transfer of the terminal phosphate group between ATP and AMP. Plays an important role in cellular energy homeostasis and in adenine nucleotide metabolism. In Lactococcus lactis subsp. cremoris (strain SK11), this protein is Adenylate kinase.